Reading from the N-terminus, the 145-residue chain is LIM domain only protein 3 (145 aa).

LIM zinc-binding domains lie at 11–73 (KGCA…LFGV) and 75–137 (GNCA…GLMK).

The polypeptide is LIM domain only protein 3 (Danio rerio (Zebrafish)).